The primary structure comprises 962 residues: MSVRKRYKVTYVLDSCNDQLGHRLDANCLVLGRYFSEQGSAPVTRALYSGGRDGQLFGWDIGYDYGKASQPLAKIQAHSAWVNDIALTHDSEGVISCSSDSTVKLWKPHVLNASCLSTIGEHTDYVKRVSIPKYSKSPLVASGGLDKRIIVWDYNVGQEVMRFEQLPDCSLVVGPRSGVYSLAANNNIIANGGLQKDIQLWDCVSKKRITDLVGHTDNVRDILISDDGRTILTASSDATIKLWSLRAQKCLFSFIAHSDSVWALYSEHPDLKVFYAGDRSGLITRTDIRNQPNNQSCTAICKQDAPVSDIVARQSFIWSTSRDGSILRWKDEPLFNQDVGAALSKHTSSHLSVSSDCPSRHSSDIRNHSCPTLYHDDAEDIYYDLHHTESYSNINLTKTPDYVIHGGIGLLKYRMLGDRRHVLTEDAVGNKCLWDILACKQAGEFDKSEDFEKIVQSLDTVQAIPRWASVNCLLGILAVTLDENHYMDAEIYADECPLLKVDSPSDKRINLGVWILKNLFREFIDAELHRDLKFRQNLDVVRSEAKKQIEAQREEARKGNVNMPSALSPLRIRSRPSPLSLPPEPLLSPTIDYSATPFPLEPPPESPGPSLQIPSNNPVYTNLTDTDSMMGAPDYFSIPARQNRNRKPHTEVVGSPTVVRTKEIIPPKVTREGSFMGRLKKLGRSKSSKSLQTDFMKASVERAASSRVFSTGTSVTSPQALSKTNNTVNNAANTENNTLAKDKQQTSEASSPGTPRELKTTGELIEDLHEQYVHFKDKDTVLSLMKPPNDDTFPMLNLSSQITVIISEESPEAGNSRDIYRSTLENMADDIDLLENIMPFWLGRLLLLNEFPSKTAPTVNFTLQPFPGSGLPLIVNENTRLSASAMLRAQKIMDYSYSKLSQQRKDVSSLQFRCKDVVVTPKMTLATVKARIWRSGDDVVFHYDVAPRSVSEIVDKTQSLNI.

WD repeat units follow at residues 25 to 69 (DANC…GKAS), 77 to 116 (AHSA…ASCL), 121 to 162 (EHTD…EVMR), 172 to 211 (VVGP…RITD), 214 to 253 (GHTD…CLFS), and 302 to 339 (KQDA…NQDV). Residues 568-578 (SPLRIRSRPSP) show a composition bias toward low complexity. Disordered stretches follow at residues 568–615 (SPLR…QIPS) and 702–758 (RAAS…PREL). Residues 707 to 723 (RVFSTGTSVTSPQALSK) are compositionally biased toward polar residues. The residue at position 717 (Ser717) is a Phosphoserine. Over residues 724-738 (TNNTVNNAANTENNT) the composition is skewed to low complexity.

As to quaternary structure, interacts with ubp9 and bun62.

Its subcellular location is the cytoplasm. The protein localises to the cell tip. In terms of biological role, required for the ubp9 recruitment to septa and cell tips but also for its enzymatic activity at these specific locations. The chain is UBP9-binding protein bun107 (bun107) from Schizosaccharomyces pombe (strain 972 / ATCC 24843) (Fission yeast).